Reading from the N-terminus, the 256-residue chain is HTH-type transcriptional regulator PrtR (256 aa).

The 54-residue stretch at 16–69 (LKQAMAMRNLKQETLAEAAGVSQNTIHKLTSGKAQSTRKLIEIAAALGVSPVWL) folds into the HTH cro/C1-type domain. A DNA-binding region (H-T-H motif) is located at residues 27 to 46 (QETLAEAAGVSQNTIHKLTS).

Functionally, represses the promoter activity of the prtN gene. This is HTH-type transcriptional regulator PrtR (prtR) from Pseudomonas aeruginosa (strain ATCC 15692 / DSM 22644 / CIP 104116 / JCM 14847 / LMG 12228 / 1C / PRS 101 / PAO1).